A 387-amino-acid polypeptide reads, in one-letter code: MSADRLPSYSVAELNTAIGSLLERGFAPRFLLEATVSRPQLKKGHLWLTLTDGSASISGVVWASKLAQLSYQPKDGDGVTVVGKLNFWAARASLTVQALDIRPSLSTVLRDFERVRQVLEQEGVIDPSRLRPLPSQPASIAVLTSVPSSALADMLRTAAERWPLTQLIVVPIPVQGSVAPTIINTLEAIAERTAELGLQALVLARGGGSREDLAVFDNEALCRLLANYPIPVVTGLGHEDDLTVADLVADHRAATPTAAIVALLPDREAERQGLTQRQSRLKDTLLGRILRERQRLQDRAVALQQQSPREKIMRKRQELIQKHQLLKALSPERWLKRGLALISNKAGDPIPGLESVKIGDQLNIRMSDGSLEARVDQIQPSAPNTTS.

The protein belongs to the XseA family. As to quaternary structure, heterooligomer composed of large and small subunits.

It localises to the cytoplasm. It carries out the reaction Exonucleolytic cleavage in either 5'- to 3'- or 3'- to 5'-direction to yield nucleoside 5'-phosphates.. Functionally, bidirectionally degrades single-stranded DNA into large acid-insoluble oligonucleotides, which are then degraded further into small acid-soluble oligonucleotides. The sequence is that of Exodeoxyribonuclease 7 large subunit from Synechococcus sp. (strain CC9605).